The sequence spans 209 residues: tRNA(Phe) 7-((3-amino-3-carboxypropyl)-4-demethylwyosine(37)-N(4))-methyltransferase (209 aa).

The protein belongs to the TYW3 family.

The enzyme catalyses 4-demethyl-7-[(3S)-3-amino-3-carboxypropyl]wyosine(37) in tRNA(Phe) + S-adenosyl-L-methionine = 7-[(3S)-3-amino-3-carboxypropyl]wyosine(37) in tRNA(Phe) + S-adenosyl-L-homocysteine + H(+). In terms of biological role, S-adenosyl-L-methionine-dependent methyltransferase that acts as a component of the wyosine derivatives biosynthesis pathway. Probably methylates N-4 position of wybutosine-86 to produce wybutosine-72. The polypeptide is tRNA(Phe) 7-((3-amino-3-carboxypropyl)-4-demethylwyosine(37)-N(4))-methyltransferase (Saccharolobus solfataricus (strain ATCC 35092 / DSM 1617 / JCM 11322 / P2) (Sulfolobus solfataricus)).